Here is a 369-residue protein sequence, read N- to C-terminus: C-C chemokine receptor type 9 (369 aa).

The Extracellular portion of the chain corresponds to 1–48 (MTPTDFTSPIPNMADDYGSESTSSMEDYVNFNFTDFYCEKNNVRQFAS). A glycan (N-linked (GlcNAc...) asparagine) is linked at Asn-32. Intrachain disulfides connect Cys-38–Cys-289 and Cys-119–Cys-198. Residues 49-74 (HFLPPLYWLVFIVGALGNSLVILVYW) form a helical membrane-spanning segment. The Cytoplasmic portion of the chain corresponds to 75-85 (YCTRVKTMTDM). The chain crosses the membrane as a helical span at residues 86 to 109 (FLLNLAIADLLFLVTLPFWAIAAA). Topologically, residues 110 to 120 (DQWKFQTFMCK) are extracellular. Residues 121–150 (VVNSMYKMNFYSCVLLIMCISVDRYIAIAQ) traverse the membrane as a helical segment. The Cytoplasmic portion of the chain corresponds to 151–159 (AMRAHTWRE). Residues 160–185 (KRLLYSKMVCFTIWVLAAALCIPEIL) form a helical membrane-spanning segment. At 186 to 208 (YSQIKEESGIAICTMVYPSDEST) the chain is on the extracellular side. A helical transmembrane segment spans residues 209–243 (KLKSAVLTLKVILGFFLPFVVMACCYTIIIHTLIQ). The Cytoplasmic segment spans residues 244 to 248 (AKKSS). Residues 249–283 (KHKALKVTITVLTVFVLSQFPYNCILLVQTIDAYA) form a helical membrane-spanning segment. Residues 284–290 (MFISNCA) are Extracellular-facing. A helical transmembrane segment spans residues 291–321 (VSTNIDICFQVTQTIAFFHSCLNPVLYVFVG). Residues 322-369 (ERFRRDLVKTLKNLGCISQAQWVSFTRREGSLKLSSMLLETTSGALSL) are Cytoplasmic-facing.

Belongs to the G-protein coupled receptor 1 family. As to expression, highly expressed in the thymus and low in lymph nodes and spleen.

It localises to the cell membrane. Functionally, receptor for chemokine SCYA25/TECK. Subsequently transduces a signal by increasing the intracellular calcium ions level. In terms of biological role, (Microbial infection) Alternative coreceptor with CD4 for HIV-1 infection. This is C-C chemokine receptor type 9 (CCR9) from Homo sapiens (Human).